We begin with the raw amino-acid sequence, 211 residues long: MYAAAQAKPQSIEVEHLGPAPMSGPRLVATYKPGREIYAQGDLNDKCYQVSTGAVRIYRLLSDGRRQVVSFHLPGEMFGFEAGSNHSFFAEAITETTLAIFGRRNMQERSRELLALALTGMARAQQHLLVIGRQCAVERIAAFLVDLCERQGGGRQLRLPMSRQDIADYLGLTIETVSRVVTKLKERSLIALRDARTIDIMKPEALRSLCN.

Residues Gln-134–Glu-204 enclose the HTH crp-type domain. Positions Arg-163–Thr-182 form a DNA-binding region, H-T-H motif.

FixK is a protein that regulates nitrogen fixation genes both positively and negatively. FixK appears to repress its own expression and that of nifA. FixK may bind DNA at the FNR consensus binding site. The sequence is that of Nitrogen fixation regulation protein FixK (fixK) from Rhizobium meliloti (strain 1021) (Ensifer meliloti).